Reading from the N-terminus, the 37-residue chain is M-oxotoxin-Ot2d (37 aa).

As to expression, expressed by the venom gland.

It localises to the secreted. Its function is as follows. Disrupts biological membranes, particularly those rich in phosphocholine. Has antimicrobial activity against Gram-negative bacterium E.coli, Gram-positive bacteria B.subtilis and S.aureus, and hemolytic activity against sheep, pig and guinea pig red blood cells. Has insecticidal activity against S.frugiperda ovarian cells by opening non-selective ion channels. Enhances the insecticidal activity of spider venom neurotoxic peptides. The sequence is that of M-oxotoxin-Ot2d from Oxyopes takobius (Lynx spider).